Consider the following 318-residue polypeptide: NADH-ubiquinone oxidoreductase chain 1 (318 aa).

The next 8 membrane-spanning stretches (helical) occupy residues 3–23, 70–90, 100–120, 146–166, 171–191, 231–251, 254–273, and 294–314; these read FINI…LTLV, LFII…IPLP, LGML…LWSG, MAII…QMLI, HIWL…STLA, IILM…HINY, LYST…FLWI, and LPLT…LAGI.

It belongs to the complex I subunit 1 family. In terms of assembly, core subunit of respiratory chain NADH dehydrogenase (Complex I) which is composed of 45 different subunits.

The protein localises to the mitochondrion inner membrane. The enzyme catalyses a ubiquinone + NADH + 5 H(+)(in) = a ubiquinol + NAD(+) + 4 H(+)(out). Core subunit of the mitochondrial membrane respiratory chain NADH dehydrogenase (Complex I) which catalyzes electron transfer from NADH through the respiratory chain, using ubiquinone as an electron acceptor. Essential for the catalytic activity and assembly of complex I. The chain is NADH-ubiquinone oxidoreductase chain 1 from Rattus norvegicus (Rat).